The chain runs to 163 residues: NADH-quinone oxidoreductase subunit I (163 aa).

4Fe-4S ferredoxin-type domains lie at 53–83 (LRRYPNGEERCIACKLCEAICPAQAITIEAG) and 94–123 (VRYDIDMVKCIYCGFCQEACPVDAIVEGPN). The [4Fe-4S] cluster site is built by Cys63, Cys66, Cys69, Cys73, Cys103, Cys106, Cys109, and Cys113.

It belongs to the complex I 23 kDa subunit family. As to quaternary structure, NDH-1 is composed of 14 different subunits. Subunits NuoA, H, J, K, L, M, N constitute the membrane sector of the complex. It depends on [4Fe-4S] cluster as a cofactor.

The protein localises to the cell inner membrane. It carries out the reaction a quinone + NADH + 5 H(+)(in) = a quinol + NAD(+) + 4 H(+)(out). Its function is as follows. NDH-1 shuttles electrons from NADH, via FMN and iron-sulfur (Fe-S) centers, to quinones in the respiratory chain. The immediate electron acceptor for the enzyme in this species is believed to be ubiquinone. Couples the redox reaction to proton translocation (for every two electrons transferred, four hydrogen ions are translocated across the cytoplasmic membrane), and thus conserves the redox energy in a proton gradient. This chain is NADH-quinone oxidoreductase subunit I, found in Brucella abortus (strain S19).